The chain runs to 351 residues: MTDLYRLLPEEMEKLVIDMGYDRYRADQILLPLYYKFPKDINDIPQLPKKLREEFTEAGYTIGSAKEIHRVVSDDGDTTKLLLELSDGSSVETVLMQYEPTKIGGHPRSTICVSTQIGCAMGCVFCATGQMGFETNLKAEHIVSQVIHFAELLEQRGEHVTNLVFMGMGEPMANYDEMIRAVKILTHDRGFGLGQRHITISTIGITSGIEKLAEENLQIGLAISLHAPNNELRKKLVPTAGPNSVEDIIKSGRDYFKKTGRRVTFEYALMEGVNDSPEIAHELARLLRGNGSHVNIIPINPTAGDFKRPSEKNVLEFEQILRKSGVNCTVRVEKGTEISAACGQLRTDIVG.

The Proton acceptor role is filled by E92. Residues 105-337 form the Radical SAM core domain; that stretch reads GHPRSTICVS…CTVRVEKGTE (233 aa). C112 and C342 form a disulfide bridge. The [4Fe-4S] cluster site is built by C119, C123, and C126. S-adenosyl-L-methionine is bound by residues 169–170, S201, 224–226, and N300; these read GE and SLH. C342 serves as the catalytic S-methylcysteine intermediate.

Belongs to the radical SAM superfamily. RlmN family. The cofactor is [4Fe-4S] cluster.

It localises to the cytoplasm. It carries out the reaction adenosine(2503) in 23S rRNA + 2 reduced [2Fe-2S]-[ferredoxin] + 2 S-adenosyl-L-methionine = 2-methyladenosine(2503) in 23S rRNA + 5'-deoxyadenosine + L-methionine + 2 oxidized [2Fe-2S]-[ferredoxin] + S-adenosyl-L-homocysteine. Specifically methylates position 2 of adenine 2503 in 23S rRNA. In Nitrosopumilus maritimus (strain SCM1), this protein is Ribosomal RNA large subunit methyltransferase N.